We begin with the raw amino-acid sequence, 210 residues long: Molybdenum cofactor guanylyltransferase (210 aa).

Residues 9–11 (LAG), K21, D66, and D95 contribute to the GTP site. D95 is a binding site for Mg(2+).

This sequence belongs to the MobA family. In terms of assembly, monomer. Mg(2+) serves as cofactor.

It localises to the cytoplasm. The enzyme catalyses Mo-molybdopterin + GTP + H(+) = Mo-molybdopterin guanine dinucleotide + diphosphate. In terms of biological role, transfers a GMP moiety from GTP to Mo-molybdopterin (Mo-MPT) cofactor (Moco or molybdenum cofactor) to form Mo-molybdopterin guanine dinucleotide (Mo-MGD) cofactor. The protein is Molybdenum cofactor guanylyltransferase of Syntrophotalea carbinolica (strain DSM 2380 / NBRC 103641 / GraBd1) (Pelobacter carbinolicus).